A 95-amino-acid chain; its full sequence is Aspartyl/glutamyl-tRNA(Asn/Gln) amidotransferase subunit C (95 aa).

Belongs to the GatC family. Heterotrimer of A, B and C subunits.

The catalysed reaction is L-glutamyl-tRNA(Gln) + L-glutamine + ATP + H2O = L-glutaminyl-tRNA(Gln) + L-glutamate + ADP + phosphate + H(+). It catalyses the reaction L-aspartyl-tRNA(Asn) + L-glutamine + ATP + H2O = L-asparaginyl-tRNA(Asn) + L-glutamate + ADP + phosphate + 2 H(+). Allows the formation of correctly charged Asn-tRNA(Asn) or Gln-tRNA(Gln) through the transamidation of misacylated Asp-tRNA(Asn) or Glu-tRNA(Gln) in organisms which lack either or both of asparaginyl-tRNA or glutaminyl-tRNA synthetases. The reaction takes place in the presence of glutamine and ATP through an activated phospho-Asp-tRNA(Asn) or phospho-Glu-tRNA(Gln). The protein is Aspartyl/glutamyl-tRNA(Asn/Gln) amidotransferase subunit C of Halorhodospira halophila (strain DSM 244 / SL1) (Ectothiorhodospira halophila (strain DSM 244 / SL1)).